The following is a 626-amino-acid chain: Probable serine/threonine-protein kinase CCRP1 (626 aa).

The Protein kinase domain maps to 36 to 291 (YSKGRMLGKG…LDEILQHPFL (256 aa)). Residues 42–50 (LGKGGFAKC) and Lys65 each bind ATP. Position 71 is a phosphoserine (Ser71). Asp159 acts as the Proton acceptor in catalysis. Residues 399-433 (NFTKTGSWQSNLNGTQSVKGSSRPQTVQQKGDLKS) are disordered. A compositionally biased stretch (polar residues) spans 400 to 427 (FTKTGSWQSNLNGTQSVKGSSRPQTVQQ). POLO box domains lie at 471 to 554 (WVKK…YLEG) and 574 to 626 (YVKK…PISP).

The protein belongs to the protein kinase superfamily. Ser/Thr protein kinase family. CDC5/Polo subfamily. As to expression, embryo.

The catalysed reaction is L-seryl-[protein] + ATP = O-phospho-L-seryl-[protein] + ADP + H(+). It carries out the reaction L-threonyl-[protein] + ATP = O-phospho-L-threonyl-[protein] + ADP + H(+). Functionally, may play a role in the division of some cell types. This Zea mays (Maize) protein is Probable serine/threonine-protein kinase CCRP1 (CCRP1).